Reading from the N-terminus, the 89-residue chain is Small ribosomal subunit protein uS15 (89 aa).

A compositionally biased stretch (basic and acidic residues) spans 1–20; that stretch reads MSITQERKSALIAEHARGKT. Positions 1–24 are disordered; sequence MSITQERKSALIAEHARGKTDTGS.

Belongs to the universal ribosomal protein uS15 family. As to quaternary structure, part of the 30S ribosomal subunit. Forms a bridge to the 50S subunit in the 70S ribosome, contacting the 23S rRNA.

One of the primary rRNA binding proteins, it binds directly to 16S rRNA where it helps nucleate assembly of the platform of the 30S subunit by binding and bridging several RNA helices of the 16S rRNA. Functionally, forms an intersubunit bridge (bridge B4) with the 23S rRNA of the 50S subunit in the ribosome. The polypeptide is Small ribosomal subunit protein uS15 (Maricaulis maris (strain MCS10) (Caulobacter maris)).